Reading from the N-terminus, the 437-residue chain is Phosphoethanolamine N-methyltransferase 2 (437 aa).

Residues 186-187 (QY) and Y195 contribute to the N-methylethanolamine phosphate site. Residues 204 to 205 (IS), G232, D254, 281 to 282 (DA), and R298 each bind S-adenosyl-L-homocysteine. N-methylethanolamine phosphate contacts are provided by residues Y329, Y343, 347 to 349 (RAY), and K415.

Belongs to the class I-like SAM-binding methyltransferase superfamily.

It carries out the reaction N-methylethanolamine phosphate + S-adenosyl-L-methionine = N,N-dimethylethanolamine phosphate + S-adenosyl-L-homocysteine + H(+). It catalyses the reaction N,N-dimethylethanolamine phosphate + S-adenosyl-L-methionine = phosphocholine + S-adenosyl-L-homocysteine + H(+). Its pathway is phospholipid metabolism; phosphatidylcholine biosynthesis; phosphocholine from phosphoethanolamine. Feedback inhibition by phosphatidylcholine and also by S-adenosylhomocysteine. Its function is as follows. Catalyzes the last two methylation reactions in the synthesis of phosphocholine, by converting phospho-monomethylethanolamine (N-methylethanolamine phosphate) into phospho-dimethylethanolamine (N,N-dimethylethanolamine phosphate) and the latter into phosphocholine. Phosphocholine is a precursor for phosphatidylcholine, a major component in membranes and a precursor itself in the production of glycoconjugates secreted by parasitic nematodes to avoid host immune responses. This is Phosphoethanolamine N-methyltransferase 2 from Caenorhabditis elegans.